A 200-amino-acid polypeptide reads, in one-letter code: Dephospho-CoA kinase (200 aa).

The region spanning 4 to 200 (VIGLTGGIAS…AILKKWNIID (197 aa)) is the DPCK domain. An ATP-binding site is contributed by 12 to 17 (ASGKST).

The protein belongs to the CoaE family.

The protein localises to the cytoplasm. The catalysed reaction is 3'-dephospho-CoA + ATP = ADP + CoA + H(+). It participates in cofactor biosynthesis; coenzyme A biosynthesis; CoA from (R)-pantothenate: step 5/5. In terms of biological role, catalyzes the phosphorylation of the 3'-hydroxyl group of dephosphocoenzyme A to form coenzyme A. The chain is Dephospho-CoA kinase from Bacillus thuringiensis subsp. konkukian (strain 97-27).